The following is a 470-amino-acid chain: 6-phospho-beta-galactosidase (470 aa).

Residues Gln19, His116, Asn159, Glu160, and Asn297 each coordinate D-galactose 6-phosphate. Catalysis depends on Glu160, which acts as the Proton donor. The active-site Nucleophile is Glu375. Residues Ser430, Trp431, Lys437, and Tyr439 each coordinate D-galactose 6-phosphate.

It belongs to the glycosyl hydrolase 1 family.

It catalyses the reaction a 6-phospho-beta-D-galactoside + H2O = D-galactose 6-phosphate + an alcohol. It functions in the pathway carbohydrate metabolism; lactose degradation; D-galactose 6-phosphate and beta-D-glucose from lactose 6-phosphate: step 1/1. The protein is 6-phospho-beta-galactosidase of Staphylococcus aureus (strain USA300).